The sequence spans 131 residues: Large ribosomal subunit protein bL17 (131 aa).

The protein belongs to the bacterial ribosomal protein bL17 family. Part of the 50S ribosomal subunit. Contacts protein L32.

The protein is Large ribosomal subunit protein bL17 of Nitrosospira multiformis (strain ATCC 25196 / NCIMB 11849 / C 71).